We begin with the raw amino-acid sequence, 383 residues long: Cobalt-precorrin-5B C(1)-methyltransferase (383 aa).

Positions 1–24 (MQPSARRPFDLATPAPNGLRRGRT) are disordered.

This sequence belongs to the CbiD family.

The enzyme catalyses Co-precorrin-5B + S-adenosyl-L-methionine = Co-precorrin-6A + S-adenosyl-L-homocysteine. It functions in the pathway cofactor biosynthesis; adenosylcobalamin biosynthesis; cob(II)yrinate a,c-diamide from sirohydrochlorin (anaerobic route): step 6/10. Catalyzes the methylation of C-1 in cobalt-precorrin-5B to form cobalt-precorrin-6A. The protein is Cobalt-precorrin-5B C(1)-methyltransferase of Ralstonia nicotianae (strain ATCC BAA-1114 / GMI1000) (Ralstonia solanacearum).